A 166-amino-acid polypeptide reads, in one-letter code: Spiderine-1a (166 aa).

A signal peptide spans 1 to 18; it reads MKFALVLLGVCAFYLVNA. A propeptide spanning residues 19-58 is cleaved from the precursor; it reads TGDLETELEASELQELQEALDLIGETPLESLEAEELEEAR. The segment at 59–99 is linear cationic cytotoxin domain; the sequence is KFKWGKLFSTAKKLYKKGKKLSKNKNFKKALKFGKQLAKNL. The Oxytoxin-type inhibitor cystine knot (ICK) domain maps to 113 to 166; the sequence is NNKCWAIGTTCSDDCDCCPEHHCHCPAGKWLPGLFRCTCQVTESDKVNKCPPAE. 5 disulfide bridges follow: C116–C130, C123–C135, C127–C162, C129–C151, and C137–C149.

Belongs to the spiderine family. Cationic/spiderine subfamily. In terms of tissue distribution, expressed by the venom gland.

It localises to the secreted. Its function is as follows. Has antimicrobial, insecticidal, cytolytic and cytotoxic activity. Active against E.coli DH5alpha, E.faecalis VKM B 871, B.subtilis VKM B 501, A.globiformis VKM Ac 1112, P.aeruginosa PAO1 and S.aureus 209P in submicromolar or low micromolar ranges. Lyses human erythrocytes. Kills HeLA and A549 cells. The polypeptide is Spiderine-1a (Oxyopes takobius (Lynx spider)).